Consider the following 469-residue polypeptide: Arginine biosynthesis bifunctional protein ArgJ, mitochondrial (469 aa).

Residues threonine 199, lysine 228, threonine 239, glutamate 325, asparagine 464, and threonine 469 each coordinate substrate. The Nucleophile role is filled by threonine 239.

It belongs to the ArgJ family. As to quaternary structure, heterodimer of an alpha and a beta chain. In terms of processing, the alpha and beta chains are autoproteolytically processed from a single precursor protein within the mitochondrion.

The protein resides in the mitochondrion matrix. The enzyme catalyses N(2)-acetyl-L-ornithine + L-glutamate = N-acetyl-L-glutamate + L-ornithine. It catalyses the reaction L-glutamate + acetyl-CoA = N-acetyl-L-glutamate + CoA + H(+). It participates in amino-acid biosynthesis; L-arginine biosynthesis; L-ornithine and N-acetyl-L-glutamate from L-glutamate and N(2)-acetyl-L-ornithine (cyclic): step 1/1. Its pathway is amino-acid biosynthesis; L-arginine biosynthesis; N(2)-acetyl-L-ornithine from L-glutamate: step 1/4. Functionally, catalyzes two activities which are involved in the cyclic version of arginine biosynthesis: the synthesis of acetylglutamate from glutamate and acetyl-CoA, and of ornithine by transacetylation between acetylornithine and glutamate. This is Arginine biosynthesis bifunctional protein ArgJ, mitochondrial from Sordaria macrospora (strain ATCC MYA-333 / DSM 997 / K(L3346) / K-hell).